Reading from the N-terminus, the 426-residue chain is Serine--tRNA ligase (426 aa).

Residues 36–66 (KRKHLQERTQDLQSQRNTISKEIGQKKAKGE) form a disordered region. A compositionally biased stretch (polar residues) spans 46 to 55 (DLQSQRNTIS). 233-235 (TAE) serves as a coordination point for L-serine. 264 to 266 (RSE) is an ATP binding site. Glutamate 287 is an L-serine binding site. 351–354 (EISS) provides a ligand contact to ATP. Serine 387 provides a ligand contact to L-serine.

Belongs to the class-II aminoacyl-tRNA synthetase family. Type-1 seryl-tRNA synthetase subfamily. In terms of assembly, homodimer. The tRNA molecule binds across the dimer.

The protein localises to the cytoplasm. It catalyses the reaction tRNA(Ser) + L-serine + ATP = L-seryl-tRNA(Ser) + AMP + diphosphate + H(+). The catalysed reaction is tRNA(Sec) + L-serine + ATP = L-seryl-tRNA(Sec) + AMP + diphosphate + H(+). Its pathway is aminoacyl-tRNA biosynthesis; selenocysteinyl-tRNA(Sec) biosynthesis; L-seryl-tRNA(Sec) from L-serine and tRNA(Sec): step 1/1. In terms of biological role, catalyzes the attachment of serine to tRNA(Ser). Is also able to aminoacylate tRNA(Sec) with serine, to form the misacylated tRNA L-seryl-tRNA(Sec), which will be further converted into selenocysteinyl-tRNA(Sec). In Francisella tularensis subsp. tularensis (strain FSC 198), this protein is Serine--tRNA ligase.